The following is a 267-amino-acid chain: Eukaryotic translation initiation factor 3 subunit J (267 aa).

The tract at residues 1 to 70 (MSWNDDDVFA…KDKKSSTDQV (70 aa)) is disordered. Acidic residues predominate over residues 24–38 (WDAEEPIMESWDAEE). Over residues 39 to 66 (TPAKKETSPKPDSKKNAKKDSKKDKKSS) the composition is skewed to basic and acidic residues. Positions 192-220 (IESIRQSIATLNVLMKDKEREERRARLAK) form a coiled coil.

This sequence belongs to the eIF-3 subunit J family. In terms of assembly, component of the eukaryotic translation initiation factor 3 (eIF-3) complex.

The protein localises to the cytoplasm. Component of the eukaryotic translation initiation factor 3 (eIF-3) complex, which is involved in protein synthesis of a specialized repertoire of mRNAs and, together with other initiation factors, stimulates binding of mRNA and methionyl-tRNAi to the 40S ribosome. The eIF-3 complex specifically targets and initiates translation of a subset of mRNAs involved in cell proliferation. The protein is Eukaryotic translation initiation factor 3 subunit J of Vanderwaltozyma polyspora (strain ATCC 22028 / DSM 70294 / BCRC 21397 / CBS 2163 / NBRC 10782 / NRRL Y-8283 / UCD 57-17) (Kluyveromyces polysporus).